The sequence spans 776 residues: DNA topoisomerase 1 (776 aa).

The region spanning 1–111 (MKLVIVESPA…VKSDDFFKRV (111 aa)) is the Toprim domain. E7 and D80 together coordinate Mg(2+). A Topo IA-type catalytic domain is found at 132 to 568 (DANLVNAQQA…FWSGFNHNIE (437 aa)). Residues 166–171 (SAGRVQ) are interaction with DNA. Catalysis depends on Y304, which acts as the O-(5'-phospho-DNA)-tyrosine intermediate. The C4-type zinc-finger motif lies at 600–627 (CPSCKTGELSLKLGKFGAFLACSNYPEC).

It belongs to the type IA topoisomerase family. Monomer. It depends on Mg(2+) as a cofactor.

The enzyme catalyses ATP-independent breakage of single-stranded DNA, followed by passage and rejoining.. Its function is as follows. Releases the supercoiling and torsional tension of DNA, which is introduced during the DNA replication and transcription, by transiently cleaving and rejoining one strand of the DNA duplex. Introduces a single-strand break via transesterification at a target site in duplex DNA. The scissile phosphodiester is attacked by the catalytic tyrosine of the enzyme, resulting in the formation of a DNA-(5'-phosphotyrosyl)-enzyme intermediate and the expulsion of a 3'-OH DNA strand. The free DNA strand then undergoes passage around the unbroken strand, thus removing DNA supercoils. Finally, in the religation step, the DNA 3'-OH attacks the covalent intermediate to expel the active-site tyrosine and restore the DNA phosphodiester backbone. In Rickettsia felis (strain ATCC VR-1525 / URRWXCal2) (Rickettsia azadi), this protein is DNA topoisomerase 1.